The primary structure comprises 316 residues: UDP-N-acetylenolpyruvoylglucosamine reductase (316 aa).

The FAD-binding PCMH-type domain occupies 27–225; that stretch reads VGGKAERFYR…KTAINALLKK (199 aa). Residue Arg-190 is part of the active site. Ser-239 serves as the catalytic Proton donor. Glu-309 is a catalytic residue.

Belongs to the MurB family. FAD is required as a cofactor.

The protein localises to the cytoplasm. It carries out the reaction UDP-N-acetyl-alpha-D-muramate + NADP(+) = UDP-N-acetyl-3-O-(1-carboxyvinyl)-alpha-D-glucosamine + NADPH + H(+). The protein operates within cell wall biogenesis; peptidoglycan biosynthesis. In terms of biological role, cell wall formation. The polypeptide is UDP-N-acetylenolpyruvoylglucosamine reductase (Coxiella burnetii (strain CbuG_Q212) (Coxiella burnetii (strain Q212))).